The following is a 623-amino-acid chain: UvrABC system protein C (623 aa).

One can recognise a GIY-YIG domain in the interval 12–91 (FSPGVYLYKD…IKQYKPRFNI (80 aa)). The 36-residue stretch at 201–236 (SDLARGLRARMEAASLEMRFEEAAGLRDLITTVEEI) folds into the UVR domain. Positions 604–623 (PVASVAQSEDAAPDVPDPQA) are disordered.

Belongs to the UvrC family. Interacts with UvrB in an incision complex.

It localises to the cytoplasm. In terms of biological role, the UvrABC repair system catalyzes the recognition and processing of DNA lesions. UvrC both incises the 5' and 3' sides of the lesion. The N-terminal half is responsible for the 3' incision and the C-terminal half is responsible for the 5' incision. This chain is UvrABC system protein C, found in Solibacter usitatus (strain Ellin6076).